A 397-amino-acid polypeptide reads, in one-letter code: Probable pyruvate dehydrogenase E1 component subunit alpha, mitochondrial (397 aa).

The pyruvate site is built by His-86, Tyr-112, Arg-113, Gly-159, Val-161, Asp-190, Gly-191, Ala-192, and Asn-219. Residues Tyr-112, Arg-113, Gly-159, Val-161, Asp-190, Gly-191, Ala-192, Asn-219, and His-286 each coordinate thiamine diphosphate. Asp-190 is a binding site for Mg(2+). Residue Asn-219 coordinates Mg(2+).

As to quaternary structure, tetramer of 2 alpha and 2 beta subunits. Thiamine diphosphate is required as a cofactor. Mg(2+) serves as cofactor.

The protein resides in the mitochondrion matrix. The enzyme catalyses N(6)-[(R)-lipoyl]-L-lysyl-[protein] + pyruvate + H(+) = N(6)-[(R)-S(8)-acetyldihydrolipoyl]-L-lysyl-[protein] + CO2. With respect to regulation, E1 activity is regulated by phosphorylation (inactivation) and dephosphorylation (activation) of the alpha subunit. Its function is as follows. The pyruvate dehydrogenase complex catalyzes the overall conversion of pyruvate to acetyl-CoA and CO(2). It contains multiple copies of three enzymatic components: pyruvate dehydrogenase (E1), dihydrolipoamide acetyltransferase (E2) and lipoamide dehydrogenase (E3). The polypeptide is Probable pyruvate dehydrogenase E1 component subunit alpha, mitochondrial (Caenorhabditis elegans).